A 121-amino-acid chain; its full sequence is Phospholipase A2 homolog ECO_00035 (121 aa).

Cystine bridges form between Cys-25/Cys-114, Cys-27/Cys-43, Cys-42/Cys-94, Cys-48/Cys-121, Cys-49/Cys-87, Cys-56/Cys-80, and Cys-74/Cys-85. Positions Lys-104–Gly-116 are important for membrane-damaging activities in eukaryotes and bacteria; heparin-binding.

Belongs to the phospholipase A2 family. Group II subfamily. S49 sub-subfamily. In terms of assembly, monomer. In terms of tissue distribution, expressed by the venom gland.

The protein localises to the secreted. Snake venom phospholipase A2 homolog that lacks enzymatic activity. Shows high myotoxin activities and displays edema-inducing activities. Has cytotoxic activities against HUVEC cells (LC(50)=4.9 uL) and human lung adenocarcinoma A549 cells (LC(50)=3.5 uL). The chain is Phospholipase A2 homolog ECO_00035 from Echis coloratus (Carpet viper).